A 483-amino-acid chain; its full sequence is Cysteine proteinase 1, mitochondrial (483 aa).

The transit peptide at 1-30 directs the protein to the mitochondrion; the sequence is MLPTSVSWSLYLKTFRSHLLRAPQIVLKRM. Residues Cys102, His398, and Asn421 contribute to the active site. A propeptide (removed in mature form; by autocatalysis) is located at residue Lys483.

This sequence belongs to the peptidase C1 family. As to quaternary structure, homohexamer. Binds to nucleic acids. Binds single-stranded DNA and RNA with higher affinity than double-stranded DNA. The N-terminus of isoform Cytoplasmic is blocked.

The protein localises to the mitochondrion. The protein resides in the cytoplasm. The enzyme catalyses Inactivates bleomycin B2 (a cytotoxic glycometallopeptide) by hydrolysis of a carboxyamide bond of beta-aminoalanine, but also shows general aminopeptidase activity. The specificity varies somewhat with source, but amino acid arylamides of Met, Leu and Ala are preferred.. Inhibited by E64, a specific inhibitor of cysteine proteases, N-ethylmaleimide, iodacetamide, and mercury and zinc ions. The normal physiological role of the enzyme is unknown, but it is not essential for the viability of yeast cells. Has aminopeptidase activity, shortening substrate peptides sequentially by 1 amino acid. Has bleomycin hydrolase activity, which can protect the cell from the toxic effects of bleomycin. Has homocysteine-thiolactonase activity, protecting the cell against homocysteine toxicity. Acts as a repressor in the GAL4 regulatory system, but this does not require either the peptidase or nucleic acid-binding activities. The protein is Cysteine proteinase 1, mitochondrial (LAP3) of Saccharomyces cerevisiae (strain YJM789) (Baker's yeast).